Here is a 273-residue protein sequence, read N- to C-terminus: Zinc finger protein 80 (273 aa).

The C2H2-type 1 zinc finger occupies 49–71 (YKCKECGSVFNKNSLLVRHQQIH). A C2H2-type 2; degenerate zinc finger spans residues 77–99 (YEYQECGKAFPEKVDFVRHMRIH). The C2H2-type 3; atypical zinc-finger motif lies at 105–127 (CKCVECRKVFNRRSHLLCYRQIH). C2H2-type zinc fingers lie at residues 133-155 (YECS…RVTH), 161-183 (FGCK…MKIH), 187-211 (KPCK…SMTH), and 217-239 (YECK…TRSH).

It belongs to the krueppel C2H2-type zinc-finger protein family.

It is found in the nucleus. In terms of biological role, may be involved in transcriptional regulation. The protein is Zinc finger protein 80 (ZNF80) of Pan troglodytes (Chimpanzee).